The following is a 295-amino-acid chain: Aspartate carbamoyltransferase catalytic subunit (295 aa).

Arg54 and Thr55 together coordinate carbamoyl phosphate. Residue Lys82 coordinates L-aspartate. Carbamoyl phosphate-binding residues include Arg104, His132, and Gln135. Arg165 and Arg218 together coordinate L-aspartate. Residues Gly257 and Pro258 each coordinate carbamoyl phosphate.

It belongs to the aspartate/ornithine carbamoyltransferase superfamily. ATCase family. In terms of assembly, heterododecamer (2C3:3R2) of six catalytic PyrB chains organized as two trimers (C3), and six regulatory PyrI chains organized as three dimers (R2).

The catalysed reaction is carbamoyl phosphate + L-aspartate = N-carbamoyl-L-aspartate + phosphate + H(+). Its pathway is pyrimidine metabolism; UMP biosynthesis via de novo pathway; (S)-dihydroorotate from bicarbonate: step 2/3. Its function is as follows. Catalyzes the condensation of carbamoyl phosphate and aspartate to form carbamoyl aspartate and inorganic phosphate, the committed step in the de novo pyrimidine nucleotide biosynthesis pathway. The polypeptide is Aspartate carbamoyltransferase catalytic subunit (Wolbachia pipientis subsp. Culex pipiens (strain wPip)).